An 85-amino-acid polypeptide reads, in one-letter code: Translation initiation factor IF-1 2 (85 aa).

Residues 1–72 enclose the S1-like domain; sequence MAKEELIEMQ…TKGRITFRHL (72 aa).

It belongs to the IF-1 family. Component of the 30S ribosomal translation pre-initiation complex which assembles on the 30S ribosome in the order IF-2 and IF-3, IF-1 and N-formylmethionyl-tRNA(fMet); mRNA recruitment can occur at any time during PIC assembly.

It is found in the cytoplasm. In terms of biological role, one of the essential components for the initiation of protein synthesis. Stabilizes the binding of IF-2 and IF-3 on the 30S subunit to which N-formylmethionyl-tRNA(fMet) subsequently binds. Helps modulate mRNA selection, yielding the 30S pre-initiation complex (PIC). Upon addition of the 50S ribosomal subunit IF-1, IF-2 and IF-3 are released leaving the mature 70S translation initiation complex. The sequence is that of Translation initiation factor IF-1 2 from Paracidovorax citrulli (strain AAC00-1) (Acidovorax citrulli).